Consider the following 443-residue polypeptide: Dihydroorotate dehydrogenase (quinone), mitochondrial (443 aa).

The transit peptide at 1–21 (MYQRSLFRGVAQGLKRSSVRF) directs the protein to the mitochondrion. Residues 38-54 (WKLLSVIGSFTAGVAIY) traverse the membrane as a helical segment. FMN contacts are provided by residues 122-126 (AGFDK) and serine 146. Lysine 126 contacts substrate. Serine 168 carries the phosphoserine modification. Substrate is bound at residue 171 to 175 (NRYGF). Asparagine 234 and asparagine 264 together coordinate FMN. 264–269 (NVSSPN) provides a ligand contact to substrate. The active-site Nucleophile is serine 267. Position 306 (lysine 306) interacts with FMN. Residue 335–336 (NT) coordinates substrate. FMN contacts are provided by residues glycine 358, glycine 387, and 408-409 (YT).

Belongs to the dihydroorotate dehydrogenase family. Type 2 subfamily. Requires FMN as cofactor.

Its subcellular location is the mitochondrion inner membrane. The catalysed reaction is (S)-dihydroorotate + a quinone = orotate + a quinol. It participates in pyrimidine metabolism; UMP biosynthesis via de novo pathway; orotate from (S)-dihydroorotate (quinone route): step 1/1. Functionally, in the de novo pyrimidine biosynthesis pathway, catalyzes the stereospecific oxidation of (S)-dihydroorotate to orotate with reduction of flavin and the transfer of electrons to ubiquinone, which is part of the respiratory chain. Does not use fumarate and NAD as electron acceptors. This chain is Dihydroorotate dehydrogenase (quinone), mitochondrial (ura3), found in Schizosaccharomyces pombe (strain 972 / ATCC 24843) (Fission yeast).